Here is a 286-residue protein sequence, read N- to C-terminus: Hydroxysteroid 11-beta-dehydrogenase 1-like protein (286 aa).

A signal peptide spans 1-17 (MGIHIKRWCFIILVASA). Residues 39–65 (GASTGIGEEIAYHYARAGAKLVLTARR), 90–91 (DM), and 117–119 (NHI) contribute to the NADP(+) site. Ser168 serves as a coordination point for substrate. Tyr181 (proton acceptor) is an active-site residue. NADP(+)-binding positions include 181–185 (YAASK) and 214–220 (GLIDTQS).

It belongs to the short-chain dehydrogenases/reductases (SDR) family.

It localises to the secreted. The enzyme catalyses cortisone + NADPH + H(+) = cortisol + NADP(+). Functionally, unidirectional NADP(+)-dependent cortisol dehydrogenase (in vitro). The protein is Hydroxysteroid 11-beta-dehydrogenase 1-like protein (hsd11b1l) of Xenopus tropicalis (Western clawed frog).